Here is a 418-residue protein sequence, read N- to C-terminus: Homeobox protein H2.0 (418 aa).

Over residues 190 to 216 the composition is skewed to basic residues; the sequence is QHQKQQHQQHHHHQHHPKHLHQQHKPP. Disordered stretches follow at residues 190–223, 259–296, and 354–418; these read QHQKQQHQQHHHHQHHPKHLHQQHKPPPHNSTTA, TSPAAAAAATSQNGAHGHGGGNGQGNASAGSNGKRKRS, and RENL…NVVE. Residues 259 to 273 are compositionally biased toward low complexity; sequence TSPAAAAAATSQNGA. Residues 295 to 354 constitute a DNA-binding region (homeobox); sequence RSWSRAVFSNLQRKGLEIQFQQQKYITKPDRRKLAARLNLTDAQVKVWFQNRRMKWRHTR. The segment covering 391–403 has biased composition (low complexity); the sequence is DYSSDSCSSVDLS.

This sequence belongs to the H2.0 homeobox family. In terms of tissue distribution, expressed in cells of the visceral musculature and its anlagen.

It is found in the nucleus. Its function is as follows. May play a role in pattern formation during embryonic and imaginal development. Is not essential for visceral muscle morphogenesis. In Drosophila melanogaster (Fruit fly), this protein is Homeobox protein H2.0 (H2.0).